Here is a 239-residue protein sequence, read N- to C-terminus: Sugar fermentation stimulation protein homolog (239 aa).

Belongs to the SfsA family.

The protein is Sugar fermentation stimulation protein homolog of Caulobacter vibrioides (strain ATCC 19089 / CIP 103742 / CB 15) (Caulobacter crescentus).